We begin with the raw amino-acid sequence, 632 residues long: Polygalacturonase non-catalytic subunit AroGP3 (632 aa).

Residues 1-27 form the signal peptide; sequence MHTKILLPSCILLLLLFTLSSLDVVVA. The propeptide occupies 28-109; it reads KDGDESGNPF…MCALDLLPSL (82 aa). Residues Asn-125, Asn-143, Asn-258, Asn-280, Asn-336, Asn-371, and Asn-389 are each glycosylated (N-linked (GlcNAc...) asparagine). Residues 417-631 form the BURP domain; it reads FFREKMLKSG…FENDMTWATA (215 aa).

As to quaternary structure, interacts with polygalacturonase to form heterodimers.

It is found in the secreted. It localises to the extracellular space. Its subcellular location is the apoplast. The protein resides in the cell wall. Functionally, non-catalytic subunit of polygalacturonase. This is Polygalacturonase non-catalytic subunit AroGP3 (GP3) from Solanum lycopersicum (Tomato).